The following is a 305-amino-acid chain: Ribonucleoside-diphosphate reductase small subunit (305 aa).

The Fe cation site is built by glutamate 64, glutamate 94, and histidine 97. The active site involves tyrosine 101. The helical transmembrane segment at 150–170 (VLIFYLIEGVFFISSFYCIGL) threads the bilayer. The Fe cation site is built by glutamate 157, glutamate 191, and histidine 194.

This sequence belongs to the ribonucleoside diphosphate reductase small chain family. As to quaternary structure, heterotetramer composed of a homodimer of the large subunit (R1) and a homodimer of the small subunit (R2). Larger multisubunit protein complex are also active, composed of (R1)n(R2)n. The cofactor is Fe cation.

The protein resides in the host membrane. It carries out the reaction a 2'-deoxyribonucleoside 5'-diphosphate + [thioredoxin]-disulfide + H2O = a ribonucleoside 5'-diphosphate + [thioredoxin]-dithiol. Its function is as follows. Ribonucleoside-diphosphate reductase holoenzyme provides the precursors necessary for viral DNA synthesis. Allows virus growth in non-dividing cells, as well as reactivation from latency in infected hosts. Catalyzes the biosynthesis of deoxyribonucleotides from the corresponding ribonucleotides. This is Ribonucleoside-diphosphate reductase small subunit from Alcelaphine herpesvirus 1 (strain C500) (AlHV-1).